A 558-amino-acid polypeptide reads, in one-letter code: Glypican-1 (558 aa).

The N-terminal stretch at 1 to 23 (MELRARGWWLLCAAAALVACTRG) is a signal peptide. 7 cysteine pairs are disulfide-bonded: Cys-32–Cys-68, Cys-62–Cys-256, Cys-69–Cys-259, Cys-191–Cys-343, Cys-246–Cys-279, Cys-268–Cys-415, and Cys-272–Cys-401. Residues Asn-79 and Asn-116 are each glycosylated (N-linked (GlcNAc...) asparagine). The tract at residues 478 to 531 (FQDASDDGSGSGSGGGCPDDACGRRVSKKSSSSRTPLIHALPGLSEQEGQKTSA) is disordered. 3 O-linked (Xyl...) (heparan sulfate) serine glycosylation sites follow: Ser-486, Ser-488, and Ser-490. Residue Ser-530 is the site of GPI-anchor amidated serine attachment. A propeptide spans 531-558 (AATRPEPHYFFLLFLFTLVLAAARPRWR) (removed in mature form).

The protein belongs to the glypican family. In terms of processing, S-nitrosylated in a Cu(2+)-dependent manner. Nitric acid (NO) is released from the nitrosylated cysteines by ascorbate or by some other reducing agent, in a Cu(2+) or Zn(2+) dependent manner. This free nitric oxide is then capable of cleaving the heparan sulfate side chains. N- and O-glycosylated. N-glycosylation is mainly of the complex type containing sialic acid. O-glycosylated with heparan sulfate. The heparan sulfate chains can be cleaved either by the action of heparanase or, degraded by a deaminative process that uses nitric oxide (NO) released from the S-nitrosylated cysteines. This process is triggered by ascorbate, or by some other reducing agent, in a Cu(2+)- or Zn(2+) dependent manner. Cu(2+) ions are provided by ceruloproteins such as APP, PRNP or CP which associate with GCP1 in intracellular compartments or lipid rafts. Post-translationally, this cell-associated glypican is further processed to give rise to a medium-released species. Nervous system.

The protein localises to the cell membrane. It is found in the endosome. It localises to the secreted. Its subcellular location is the extracellular space. Cell surface proteoglycan that bears heparan sulfate. May act as a catalyst in increasing the rate of conversion of prion protein PRPN(C) to PRNP(Sc) via associating (via the heparan sulfate side chains) with both forms of PRPN, targeting them to lipid rafts and facilitating their interaction. Required for proper skeletal muscle differentiation by sequestering FGF2 in lipid rafts preventing its binding to receptors (FGFRs) and inhibiting the FGF-mediated signaling. Binds Cu(2+) or Zn(2+) ions. Binds, via the heparan sulfate side chains, alpha-4 (V) collagen and participates in Schwann cell myelination. In Rattus norvegicus (Rat), this protein is Glypican-1 (Gpc1).